We begin with the raw amino-acid sequence, 480 residues long: Initiation-specific alpha-1,6-mannosyltransferase (480 aa).

The Cytoplasmic portion of the chain corresponds to 1 to 15 (MSRKLSHLIATRKSK). Residues 16–30 (TIVVTVLLIYSLLTF) traverse the membrane as a helical; Signal-anchor for type II membrane protein segment. At 31 to 480 (HLSNKRLLSQ…EDADKNAGHK (450 aa)) the chain is on the lumenal side. The DXD motif motif lies at 187–189 (DMD). Asn-203, Asn-281, Asn-341, and Asn-393 each carry an N-linked (GlcNAc...) asparagine glycan.

It belongs to the glycosyltransferase 32 family. Requires Mn(2+) as cofactor. Post-translationally, glycosylated.

Its subcellular location is the endoplasmic reticulum membrane. It is found in the golgi apparatus membrane. The catalysed reaction is Transfers an alpha-D-mannosyl residue from GDP-mannose into lipid-linked oligosaccharide, forming an alpha-(1-&gt;6)-D-mannosyl-D-mannose linkage.. In terms of biological role, mannosyltransferase involved in outer chain elongation of asparagine-linked oligosaccharides of the type Man(9)GlcNAc(2). Adds the first alpha-1,6-mannose to the Man(8)GlcNAc(2) and Man(9)GlcNAc(2), but not Man(5)GlcNAc(2), endoplasmic reticulum intermediates. Represents the first enzymatic event required for synthesis of outer chain mannose linkages on yeast secretory proteins. Also has the potential to transfer a second alpha-1,6-mannose to the Man(8)GlcNAc(2) core oligosaccharide. The protein is Initiation-specific alpha-1,6-mannosyltransferase of Saccharomyces cerevisiae (strain ATCC 204508 / S288c) (Baker's yeast).